We begin with the raw amino-acid sequence, 880 residues long: MEKSIAKGLSDKLYEKRKAAALELEKLVKQCVLEGDYDRIDKIIDELCRDYAYALHQPMARNAGLMGLAATAIALGINDVGRYLRNILPPVLACFGDQNDQVRFYACESLYNIAKIAKGEILVYFNEIFDVLCKISADTENSVRGAAELLDRLIKDIVAERASNYISIVNNGSHGLLPAIKTDPISGDVYQEEYEQDNQLAFSLPKFIPLLTERIYAINPDTRVFLVDWLKVLLNTPGLELISYLPSFLGGLFTFLGDSHKDVRTVTHTLMDSLLHEVDRISKLQTEIKMKRLERLKMLEDKYNNSSTPTKKADGALIAEKKKTLMTALGGLSKPLSMETDDTKLSNTNETDDERHLTSQEQLLDSEATSQEPLRDGEEYIPGQDINLNFPEVITVLVNNLASSEAEIQLIALHWIQVILSISPNVFIPFLSKILSVLLKLLSDSDPHITEIAQLVNGQLLSLCSSYVGKETDGKIAYGPIVNSLTLQFFDSRIDAKIACLDWLILIYHKAPNQILKHNDSMFLTLLKSLSNRDSVLIEKALSLLQSLCSDSNDNYLRQFLQDLLTLFKRDTKLVKTRANFIMRQISSRLSPERVYKVISSILDNYNDTTFVKMMIQILSTNLITSPEMSSLRNKLRTCEDGMFFNSLFKSWCPNPVSVISLCFVAENYELAYTVLQTYANYELKLNDLVQLDILIQLFESPVFTRMRLQLLEQQKHPFLHKCLFGILMIIPQSKAFETLNRRLNSLNIWTSQSYVMNNYIRQRENSNFCDSNSDISQRSVSQSKLHFQELINHFKAVSEEDEYSSDMIRLDHGANNKSLLLGSFLDGIDEDKQEIVTPISPMNEAINEEMESPNDNSSVILKDSGSLPFNRNVSDKLKK.

HEAT repeat units follow at residues 82-119 and 243-280; these read RYLR…IAKG and SYLP…EVDR. Residues 333–373 are disordered; it reads SKPLSMETDDTKLSNTNETDDERHLTSQEQLLDSEATSQEP. Polar residues predominate over residues 359 to 372; the sequence is SQEQLLDSEATSQE. 3 HEAT repeats span residues 388 to 425, 429 to 466, and 517 to 554; these read LNFP…ISPN, PFLS…LCSS, and KHND…DSND. Phosphoserine occurs at positions 767, 805, and 867. Residues 850-880 form a disordered region; sequence EMESPNDNSSVILKDSGSLPFNRNVSDKLKK.

This sequence belongs to the VAC14 family. As to quaternary structure, component of the PI(3,5)P2 regulatory complex, composed of ATG18, FIG4, FAB1, VAC14 and VAC7. VAC14 nucleates the assembly of the complex and serves as a scaffold.

The protein resides in the vacuole membrane. Functionally, the PI(3,5)P2 regulatory complex regulates both the synthesis and turnover of phosphatidylinositol 3,5-bisphosphate (PtdIns(3,5)P2). Regulates the synthesis of PtdIns(3,5)P2 by positive activation of FAB1 and by controlling FIG4 localization. Required for FIG4-mediated turnover of PtdIns(3,5)P2 after hyperosmotic shock. Essential for the control of trafficking of some proteins to the vacuole lumen via the multivesicular body (MVB), and for maintenance of vacuole size and acidity. The chain is Vacuole morphology and inheritance protein 14 (VAC14) from Saccharomyces cerevisiae (strain ATCC 204508 / S288c) (Baker's yeast).